Consider the following 598-residue polypeptide: Aspartate--tRNA(Asp/Asn) ligase (598 aa).

E177 contributes to the L-aspartate binding site. The interval 201–204 is aspartate; the sequence is QLFK. R223 contacts L-aspartate. ATP is bound by residues 223 to 225 and Q232; that span reads RDE. An L-aspartate-binding site is contributed by H456. ATP is bound at residue E493. R500 serves as a coordination point for L-aspartate. Position 545–548 (545–548) interacts with ATP; the sequence is GVDR.

Belongs to the class-II aminoacyl-tRNA synthetase family. Type 1 subfamily. Homodimer.

The protein localises to the cytoplasm. It carries out the reaction tRNA(Asx) + L-aspartate + ATP = L-aspartyl-tRNA(Asx) + AMP + diphosphate. Its function is as follows. Aspartyl-tRNA synthetase with relaxed tRNA specificity since it is able to aspartylate not only its cognate tRNA(Asp) but also tRNA(Asn). Reaction proceeds in two steps: L-aspartate is first activated by ATP to form Asp-AMP and then transferred to the acceptor end of tRNA(Asp/Asn). The protein is Aspartate--tRNA(Asp/Asn) ligase of Prochlorococcus marinus subsp. pastoris (strain CCMP1986 / NIES-2087 / MED4).